Here is a 349-residue protein sequence, read N- to C-terminus: Replication-associated protein (349 aa).

Positions R9–Y118 constitute a CRESS-DNA virus Rep endonuclease domain. An RCR-1 motif is present at residues F16 to Y19. Residues E51, H59, and H61 each contribute to the a divalent metal cation site. The RCR-2 signature appears at H59–H61. The active-site For DNA cleavage activity is the Y105. The RCR-3 motif lies at Y105 to K108. Residue D109 coordinates a divalent metal cation. The interval V141–G151 is binding to RBR1. Residues K154–A174 are oligomerization. Position 220–227 (G220–T227) interacts with ATP.

This sequence belongs to the geminiviridae Rep protein family. In terms of assembly, homooligomer. Interacts with the replication enhancer protein (REn). Interacts with host retinoblastoma-related protein 1 (RBR1), and may thereby induce the transcription of host replicative enzymes even if the cell is not dividing anymore. Interacts with host PCNA. Interacts with host SCE1 protein. It depends on Mg(2+) as a cofactor. Mn(2+) serves as cofactor.

The protein localises to the host nucleus. Functionally, essential for the replication of viral ssDNA. The closed circular ssDNA genome is first converted to a superhelical dsDNA. Rep binds a specific region at the genome origin of replication. It introduces an endonucleolytic nick within the conserved sequence 5'-TAATATTAC-3' in the intergenic region of the genome present in all geminiviruses, thereby initiating the rolling circle replication (RCR). Following cleavage, binds covalently to the 5'-phosphate of DNA as a tyrosyl ester. The cleavage gives rise to a free 3'-OH that serves as a primer for the cellular DNA polymerase. The polymerase synthesizes the (+) strand DNA by rolling circle mechanism. After one round of replication, a Rep-catalyzed nucleotidyl transfer reaction releases a circular single-stranded virus genome, thereby terminating the replication. Displays origin-specific DNA cleavage, nucleotidyl transferase, ATPase and helicase activities. This is Replication-associated protein from Cabbage leaf curl virus (isolate Jamaica) (CaLCuV).